A 297-amino-acid polypeptide reads, in one-letter code: Aspartate carbamoyltransferase catalytic subunit (297 aa).

Positions 52 and 53 each coordinate carbamoyl phosphate. Lysine 80 contributes to the L-aspartate binding site. Carbamoyl phosphate-binding residues include arginine 102, histidine 130, and glutamine 133. Residues arginine 167 and arginine 217 each coordinate L-aspartate. 2 residues coordinate carbamoyl phosphate: glycine 256 and proline 257.

It belongs to the aspartate/ornithine carbamoyltransferase superfamily. ATCase family. As to quaternary structure, heterododecamer (2C3:3R2) of six catalytic PyrB chains organized as two trimers (C3), and six regulatory PyrI chains organized as three dimers (R2).

It carries out the reaction carbamoyl phosphate + L-aspartate = N-carbamoyl-L-aspartate + phosphate + H(+). Its pathway is pyrimidine metabolism; UMP biosynthesis via de novo pathway; (S)-dihydroorotate from bicarbonate: step 2/3. In terms of biological role, catalyzes the condensation of carbamoyl phosphate and aspartate to form carbamoyl aspartate and inorganic phosphate, the committed step in the de novo pyrimidine nucleotide biosynthesis pathway. This Helicobacter hepaticus (strain ATCC 51449 / 3B1) protein is Aspartate carbamoyltransferase catalytic subunit.